Reading from the N-terminus, the 353-residue chain is Alanine racemase (353 aa).

The active-site Proton acceptor; specific for D-alanine is the Lys-34. Lys-34 is modified (N6-(pyridoxal phosphate)lysine). A substrate-binding site is contributed by Arg-128. The active-site Proton acceptor; specific for L-alanine is the Tyr-251. Residue Met-299 participates in substrate binding.

It belongs to the alanine racemase family. Pyridoxal 5'-phosphate serves as cofactor.

The enzyme catalyses L-alanine = D-alanine. It functions in the pathway amino-acid biosynthesis; D-alanine biosynthesis; D-alanine from L-alanine: step 1/1. Catalyzes the interconversion of L-alanine and D-alanine. May also act on other amino acids. The sequence is that of Alanine racemase (alr) from Alcanivorax borkumensis (strain ATCC 700651 / DSM 11573 / NCIMB 13689 / SK2).